Here is a 341-residue protein sequence, read N- to C-terminus: Fructose-1,6-bisphosphatase, cytosolic (341 aa).

Positions 71, 100, 121, 123, and 124 each coordinate Mg(2+). Residues 124–127 (DGSS), asparagine 215, tyrosine 247, tyrosine 267, and lysine 277 each bind substrate. Glutamate 283 lines the Mg(2+) pocket.

Belongs to the FBPase class 1 family. Mg(2+) is required as a cofactor.

It is found in the cytoplasm. The protein resides in the nucleus. The enzyme catalyses beta-D-fructose 1,6-bisphosphate + H2O = beta-D-fructose 6-phosphate + phosphate. In terms of biological role, catalyzes the first irreversible reaction from fructose-1,6-bisphosphate to fructose-6-phosphate and inorganic phosphate and plays an important regulatory role in sucrose biosynthesis and metabolism. Its activity is essential to regulate starch levels. Functions in fructose-mediated signaling independently of its catalytic activity in sugar metabolism. May act downstream of ABA2/GIN1, which is involved in abscisic acid (ABA) synthesis to regulate autotrophic transition and modulate early seedling establishment after seed germination. This Arabidopsis thaliana (Mouse-ear cress) protein is Fructose-1,6-bisphosphatase, cytosolic.